A 307-amino-acid chain; its full sequence is MGTVLSLSPSYRKATLFEDGAATVGHYTAVQNSKNAKDKNLKRHSIISVLPWKRIVAVSAKKKNSKKVQPNSSYQNNITHLNNENLKKSLSCANLSTFAQPPPAQPPAPPASQLSGSQTGVSSSVKKAPHPAVSSAGTPKRVIVQASTSELLRCLGEFLCRRCYRLKHLSPTDPVLWLRSVDRSLLLQGWQDQGFITPANVVFLYMLCRDVISSEVGSDHELQAVLLTCLYLSYSYMGNEISYPLKPFLVESCKEAFWDRCLSVINLMSSKMLQINADPHYFTQVFSDLKNESGQEDKKRLLLGLDR.

G2 is lipidated: N-myristoyl glycine. S8 is modified (phosphoserine; by CDK5). The tract at residues 97-135 (TFAQPPPAQPPAPPASQLSGSQTGVSSSVKKAPHPAVSS) is disordered. The segment covering 100-110 (QPPPAQPPAPP) has biased composition (pro residues). A compositionally biased stretch (polar residues) spans 112 to 125 (SQLSGSQTGVSSSV). T138 is subject to Phosphothreonine; by CDK5.

This sequence belongs to the cyclin-dependent kinase 5 activator family. As to quaternary structure, heterodimer composed of a catalytic subunit CDK5 and a regulatory subunit CDK5R1 (p25) and macromolecular complex composed of at least CDK5, CDK5R1 (p35) and CDK5RAP1 or CDK5RAP2 or CDK5RAP3. Only the heterodimer shows kinase activity. Interacts with EPHA4 and NGEF; may mediate the activation of NGEF by EPHA4. Interacts with RASGRF2. The complex p35/CDK5 interacts with CLOCK. Post-translationally, the p35 form is proteolytically cleaved by calpain, giving rise to the p25 form. P35 has a 5 to 10 fold shorter half-life compared to p25. The conversion results in deregulation of the CDK5 kinase: p25/CDK5 kinase displays an increased and altered tau phosphorylation in comparison to the p35/CDK5 kinase in vivo. In terms of processing, myristoylated. A proper myristoylation signal is essential for the proper distribution of p35. Phosphorylation at Ser-8 and Thr-138 by CDK5 prevents calpain-mediated proteolysis. Post-translationally, ubiquitinated, leading to its degradation: degradation of p35 by proteasome results in down-regulation of CDK5 activity. During this process, CDK5 phosphorylates p35 and induces its ubiquitination and subsequent degradation. Ubiquitinated by the CRL2(FEM1B) complex, which recognizes the -Gly-Leu-Asp-Arg C-degron at the C-terminus, leading to its degradation. In terms of tissue distribution, brain and neuron specific.

Its subcellular location is the cell membrane. It localises to the cell projection. It is found in the neuron projection. The protein localises to the nucleus. The protein resides in the cytoplasm. Its subcellular location is the perinuclear region. It localises to the perikaryon. Functionally, p35 is a neuron specific activator of CDK5. The complex p35/CDK5 is required for neurite outgrowth and cortical lamination. Involved in dendritic spine morphogenesis by mediating the EFNA1-EPHA4 signaling. Activator of TPKII. The complex p35/CDK5 participates in the regulation of the circadian clock by modulating the function of CLOCK protein: phosphorylates CLOCK at 'Thr-451' and 'Thr-461' and regulates the transcriptional activity of the CLOCK-BMAL1 heterodimer in association with altered stability and subcellular distribution. The polypeptide is Cyclin-dependent kinase 5 activator 1 (CDK5R1) (Bos taurus (Bovine)).